We begin with the raw amino-acid sequence, 517 residues long: GMP synthase [glutamine-hydrolyzing] (517 aa).

The Glutamine amidotransferase type-1 domain maps to 9–199 (RILILDFGSQ…VLGVCGCERL (191 aa)). The active-site Nucleophile is the Cys86. Active-site residues include His173 and Glu175. A GMPS ATP-PPase domain is found at 200–392 (WTSESIIEDA…LGLPYNMLYR (193 aa)). 227-233 (SGGVDSS) serves as a coordination point for ATP.

In terms of assembly, homodimer.

The enzyme catalyses XMP + L-glutamine + ATP + H2O = GMP + L-glutamate + AMP + diphosphate + 2 H(+). It participates in purine metabolism; GMP biosynthesis; GMP from XMP (L-Gln route): step 1/1. Its function is as follows. Catalyzes the synthesis of GMP from XMP. The chain is GMP synthase [glutamine-hydrolyzing] from Vibrio cholerae serotype O1 (strain ATCC 39541 / Classical Ogawa 395 / O395).